The chain runs to 135 residues: Ribosome-binding factor A (135 aa).

This sequence belongs to the RbfA family. In terms of assembly, monomer. Binds 30S ribosomal subunits, but not 50S ribosomal subunits or 70S ribosomes.

It localises to the cytoplasm. One of several proteins that assist in the late maturation steps of the functional core of the 30S ribosomal subunit. Associates with free 30S ribosomal subunits (but not with 30S subunits that are part of 70S ribosomes or polysomes). Required for efficient processing of 16S rRNA. May interact with the 5'-terminal helix region of 16S rRNA. This Caldicellulosiruptor saccharolyticus (strain ATCC 43494 / DSM 8903 / Tp8T 6331) protein is Ribosome-binding factor A.